We begin with the raw amino-acid sequence, 406 residues long: S-adenosylmethionine synthase (406 aa).

His16 contributes to the ATP binding site. Residue Asp18 coordinates Mg(2+). A K(+)-binding site is contributed by Glu44. L-methionine-binding residues include Glu57 and Gln109. The segment at 109 to 119 (QSPQIAQGVDE) is flexible loop. ATP is bound by residues 174 to 176 (DAK), 249 to 250 (RF), Asp258, 264 to 265 (RK), Ala281, and Lys285. Asp258 provides a ligand contact to L-methionine. Lys289 is a binding site for L-methionine.

Belongs to the AdoMet synthase family. Homotetramer; dimer of dimers. Mg(2+) is required as a cofactor. The cofactor is K(+).

Its subcellular location is the cytoplasm. It catalyses the reaction L-methionine + ATP + H2O = S-adenosyl-L-methionine + phosphate + diphosphate. It functions in the pathway amino-acid biosynthesis; S-adenosyl-L-methionine biosynthesis; S-adenosyl-L-methionine from L-methionine: step 1/1. In terms of biological role, catalyzes the formation of S-adenosylmethionine (AdoMet) from methionine and ATP. The overall synthetic reaction is composed of two sequential steps, AdoMet formation and the subsequent tripolyphosphate hydrolysis which occurs prior to release of AdoMet from the enzyme. This Sphingopyxis alaskensis (strain DSM 13593 / LMG 18877 / RB2256) (Sphingomonas alaskensis) protein is S-adenosylmethionine synthase.